The sequence spans 188 residues: V-type ATP synthase subunit E (188 aa).

It belongs to the V-ATPase E subunit family.

In terms of biological role, produces ATP from ADP in the presence of a proton gradient across the membrane. This chain is V-type ATP synthase subunit E (atpE), found in Thermus thermophilus (strain ATCC 27634 / DSM 579 / HB8).